We begin with the raw amino-acid sequence, 242 residues long: Uridylate kinase (242 aa).

16–19 (KVSG) lines the ATP pocket. G58 provides a ligand contact to UMP. 2 residues coordinate ATP: G59 and R63. Residues D78 and 139–146 (TGNPFCTT) contribute to the UMP site. T166, Q167, Y172, and D175 together coordinate ATP.

The protein belongs to the UMP kinase family. As to quaternary structure, homohexamer.

The protein resides in the cytoplasm. It carries out the reaction UMP + ATP = UDP + ADP. It functions in the pathway pyrimidine metabolism; CTP biosynthesis via de novo pathway; UDP from UMP (UMPK route): step 1/1. Inhibited by UTP. Its function is as follows. Catalyzes the reversible phosphorylation of UMP to UDP. This is Uridylate kinase from Rickettsia massiliae (strain Mtu5).